A 340-amino-acid chain; its full sequence is uncharacterized protein (340 aa).

Over residues lysine 193–threonine 207 the composition is skewed to basic and acidic residues. The tract at residues lysine 193–isoleucine 340 is disordered. Low complexity predominate over residues phenylalanine 217 to serine 228. Residues glutamate 235–isoleucine 244 show a composition bias toward basic and acidic residues. Composition is skewed to polar residues over residues serine 263–glutamine 279 and proline 307–leucine 328.

This is an uncharacterized protein from Saccharomyces cerevisiae (strain ATCC 204508 / S288c) (Baker's yeast).